A 333-amino-acid polypeptide reads, in one-letter code: Ketol-acid reductoisomerase (NADP(+)) (333 aa).

The 171-residue stretch at 1–171 folds into the KARI N-terminal Rossmann domain; the sequence is MSNDTQPKIA…GGARANIIKT (171 aa). Residues 14–17, Arg37, Thr42, and 72–75 each bind NADP(+); these read YGSQ and DMVQ. His97 is an active-site residue. Residue Gly123 coordinates NADP(+). The KARI C-terminal knotted domain occupies 172 to 317; sequence TFKEETETDL…KKLRAKMVWL (146 aa). Mg(2+) contacts are provided by Asp180, Glu184, Glu216, and Glu220. Ser241 is a substrate binding site.

Belongs to the ketol-acid reductoisomerase family. The cofactor is Mg(2+).

It catalyses the reaction (2R)-2,3-dihydroxy-3-methylbutanoate + NADP(+) = (2S)-2-acetolactate + NADPH + H(+). It carries out the reaction (2R,3R)-2,3-dihydroxy-3-methylpentanoate + NADP(+) = (S)-2-ethyl-2-hydroxy-3-oxobutanoate + NADPH + H(+). The protein operates within amino-acid biosynthesis; L-isoleucine biosynthesis; L-isoleucine from 2-oxobutanoate: step 2/4. It participates in amino-acid biosynthesis; L-valine biosynthesis; L-valine from pyruvate: step 2/4. Functionally, involved in the biosynthesis of branched-chain amino acids (BCAA). Catalyzes an alkyl-migration followed by a ketol-acid reduction of (S)-2-acetolactate (S2AL) to yield (R)-2,3-dihydroxy-isovalerate. In the isomerase reaction, S2AL is rearranged via a Mg-dependent methyl migration to produce 3-hydroxy-3-methyl-2-ketobutyrate (HMKB). In the reductase reaction, this 2-ketoacid undergoes a metal-dependent reduction by NADPH to yield (R)-2,3-dihydroxy-isovalerate. The protein is Ketol-acid reductoisomerase (NADP(+)) of Xanthomonas euvesicatoria pv. vesicatoria (strain 85-10) (Xanthomonas campestris pv. vesicatoria).